A 401-amino-acid polypeptide reads, in one-letter code: Argininosuccinate synthase (401 aa).

ATP contacts are provided by residues 7-15 (AYSGGLDTS) and alanine 34. The L-citrulline site is built by tyrosine 85 and serine 90. Glycine 115 serves as a coordination point for ATP. L-aspartate contacts are provided by threonine 117, asparagine 121, and aspartate 122. Asparagine 121 serves as a coordination point for L-citrulline. L-citrulline contacts are provided by arginine 125, serine 174, serine 183, glutamate 259, and tyrosine 271.

The protein belongs to the argininosuccinate synthase family. Type 1 subfamily. As to quaternary structure, homotetramer.

Its subcellular location is the cytoplasm. It catalyses the reaction L-citrulline + L-aspartate + ATP = 2-(N(omega)-L-arginino)succinate + AMP + diphosphate + H(+). The protein operates within amino-acid biosynthesis; L-arginine biosynthesis; L-arginine from L-ornithine and carbamoyl phosphate: step 2/3. The sequence is that of Argininosuccinate synthase from Desulforamulus reducens (strain ATCC BAA-1160 / DSM 100696 / MI-1) (Desulfotomaculum reducens).